A 315-amino-acid polypeptide reads, in one-letter code: Ribosomal RNA small subunit methyltransferase H (315 aa).

S-adenosyl-L-methionine is bound by residues 33–35 (GGH), Asp-52, Phe-84, Asp-106, and Gln-113.

This sequence belongs to the methyltransferase superfamily. RsmH family.

The protein resides in the cytoplasm. It carries out the reaction cytidine(1402) in 16S rRNA + S-adenosyl-L-methionine = N(4)-methylcytidine(1402) in 16S rRNA + S-adenosyl-L-homocysteine + H(+). In terms of biological role, specifically methylates the N4 position of cytidine in position 1402 (C1402) of 16S rRNA. This is Ribosomal RNA small subunit methyltransferase H from Lactobacillus acidophilus (strain ATCC 700396 / NCK56 / N2 / NCFM).